We begin with the raw amino-acid sequence, 918 residues long: Valine--tRNA ligase (918 aa).

The 'HIGH' region motif lies at P50–H60. Positions K548–S552 match the 'KMSKS' region motif. K551 lines the ATP pocket. Residues N849 to N883 adopt a coiled-coil conformation.

Belongs to the class-I aminoacyl-tRNA synthetase family. ValS type 1 subfamily. As to quaternary structure, monomer.

It is found in the cytoplasm. It carries out the reaction tRNA(Val) + L-valine + ATP = L-valyl-tRNA(Val) + AMP + diphosphate. Functionally, catalyzes the attachment of valine to tRNA(Val). As ValRS can inadvertently accommodate and process structurally similar amino acids such as threonine, to avoid such errors, it has a 'posttransfer' editing activity that hydrolyzes mischarged Thr-tRNA(Val) in a tRNA-dependent manner. The polypeptide is Valine--tRNA ligase (Prochlorococcus marinus subsp. pastoris (strain CCMP1986 / NIES-2087 / MED4)).